Consider the following 901-residue polypeptide: Protein translocase subunit SecA (901 aa).

Residues Q87, 105-109, and D512 contribute to the ATP site; that span reads GEGKT. The tract at residues 859-901 is disordered; it reads HQDDDSAAAAALAAQTGERKVGRNDPCPCGSGKKYKQCHGRLQ. The Zn(2+) site is built by C885, C887, C896, and H897. The segment covering 891-901 has biased composition (basic residues); it reads KKYKQCHGRLQ.

The protein belongs to the SecA family. In terms of assembly, monomer and homodimer. Part of the essential Sec protein translocation apparatus which comprises SecA, SecYEG and auxiliary proteins SecDF-YajC and YidC. Requires Zn(2+) as cofactor.

The protein resides in the cell inner membrane. It is found in the cytoplasm. The enzyme catalyses ATP + H2O + cellular proteinSide 1 = ADP + phosphate + cellular proteinSide 2.. Functionally, part of the Sec protein translocase complex. Interacts with the SecYEG preprotein conducting channel. Has a central role in coupling the hydrolysis of ATP to the transfer of proteins into and across the cell membrane, serving both as a receptor for the preprotein-SecB complex and as an ATP-driven molecular motor driving the stepwise translocation of polypeptide chains across the membrane. This chain is Protein translocase subunit SecA, found in Shigella dysenteriae serotype 1 (strain Sd197).